Here is a 287-residue protein sequence, read N- to C-terminus: Large ribosomal subunit protein uL2 (287 aa).

The disordered stretch occupies residues Arg-221 to Ser-287. Basic residues predominate over residues Lys-258–Ser-287.

It belongs to the universal ribosomal protein uL2 family. In terms of assembly, part of the 50S ribosomal subunit. Forms a bridge to the 30S subunit in the 70S ribosome.

In terms of biological role, one of the primary rRNA binding proteins. Required for association of the 30S and 50S subunits to form the 70S ribosome, for tRNA binding and peptide bond formation. It has been suggested to have peptidyltransferase activity; this is somewhat controversial. Makes several contacts with the 16S rRNA in the 70S ribosome. The chain is Large ribosomal subunit protein uL2 from Prochlorococcus marinus (strain SARG / CCMP1375 / SS120).